The following is a 132-amino-acid chain: UPF0299 membrane protein YohJ (132 aa).

Helical transmembrane passes span 7–27 (IIWQ…AGIF), 31–51 (LLPV…VLLA), 63–83 (GCYV…VGVM), and 93–113 (FGPV…VVSW).

It belongs to the UPF0299 family.

It is found in the cell inner membrane. This chain is UPF0299 membrane protein YohJ, found in Shigella boydii serotype 4 (strain Sb227).